Consider the following 163-residue polypeptide: Probable cobalt-precorrin-6B C(15)-methyltransferase (decarboxylating) (163 aa).

Residues threonine 6, 30 to 34 (GCGSG), aspartate 51, and glycine 75 each bind S-adenosyl-L-methionine.

The protein belongs to the methyltransferase superfamily. Archaeal-type CbiT family.

It carries out the reaction Co-precorrin-6B + S-adenosyl-L-methionine = Co-precorrin-7 + S-adenosyl-L-homocysteine + CO2. It functions in the pathway cofactor biosynthesis; adenosylcobalamin biosynthesis; cob(II)yrinate a,c-diamide from sirohydrochlorin (anaerobic route): step 8/10. Functionally, catalyzes the methylation of C-15 in cobalt-precorrin-6B followed by the decarboxylation of C-12 to form cobalt-precorrin-7. This Archaeoglobus fulgidus (strain ATCC 49558 / DSM 4304 / JCM 9628 / NBRC 100126 / VC-16) protein is Probable cobalt-precorrin-6B C(15)-methyltransferase (decarboxylating).